We begin with the raw amino-acid sequence, 85 residues long: MNISKQEQRVLHTLAMGGEIRRYLNEDGKLTEITCFTREGYGLSNCTMDTFKKLKNKKLISSKGGRPYRITPLGATSAQAQMNQR.

This sequence belongs to the UPF0386 family.

In Aliivibrio fischeri (strain ATCC 700601 / ES114) (Vibrio fischeri), this protein is UPF0386 protein VF_0869.